Here is a 455-residue protein sequence, read N- to C-terminus: Chromosomal replication initiator protein DnaA (455 aa).

The domain I, interacts with DnaA modulators stretch occupies residues 1 to 74; sequence MFNFEKFWQH…IQSAYGYAGV (74 aa). The domain II stretch occupies residues 74 to 117; the sequence is VELLPVFQISEDSDTPERIVTPEPQHNLQTTPTRAPQREFAKDL. A domain III, AAA+ region region spans residues 118–334; sequence KLNEKYTFDN…GALVKVQAYA (217 aa). 4 residues coordinate ATP: Gly-162, Gly-164, Lys-165, and Thr-166. Positions 335–455 are domain IV, binds dsDNA; the sequence is TIEKADIDIN…VFDLKQMLEH (121 aa).

This sequence belongs to the DnaA family. In terms of assembly, oligomerizes as a right-handed, spiral filament on DNA at oriC.

The protein localises to the cytoplasm. Plays an essential role in the initiation and regulation of chromosomal replication. ATP-DnaA binds to the origin of replication (oriC) to initiate formation of the DNA replication initiation complex once per cell cycle. Binds the DnaA box (a 9 base pair repeat at the origin) and separates the double-stranded (ds)DNA. Forms a right-handed helical filament on oriC DNA; dsDNA binds to the exterior of the filament while single-stranded (ss)DNA is stabiized in the filament's interior. The ATP-DnaA-oriC complex binds and stabilizes one strand of the AT-rich DNA unwinding element (DUE), permitting loading of DNA polymerase. After initiation quickly degrades to an ADP-DnaA complex that is not apt for DNA replication. Binds acidic phospholipids. This chain is Chromosomal replication initiator protein DnaA, found in Lactobacillus acidophilus (strain ATCC 700396 / NCK56 / N2 / NCFM).